The primary structure comprises 561 residues: Potassium-transporting ATPase potassium-binding subunit (561 aa).

The next 10 helical transmembrane spans lie at 4–24 (IIMQDVFFIVLLLVLAIPLGI), 65–85 (AGSVLAFSAIGFVFVMAVLML), 134–154 (GLTVQNFVSAATGIAVLFAVI), 177–197 (LYILLPLSLVLAILLVSQGVV), 253–273 (FTNLIEMLAILLIPVALVVMF), 285–305 (AIMTAMMIVFVVGIVAITISE), 380–400 (GLYGMIGFIILTVFIAGLLVG), 417–437 (MVCLLILVPPLLTLFGTAFAV), 484–504 (MVGALMMLFARFIPLIAALYL), and 528–548 (FIGLLIGVVVLVGALSFLPAL).

Belongs to the KdpA family. The system is composed of three essential subunits: KdpA, KdpB and KdpC.

The protein resides in the cell membrane. In terms of biological role, part of the high-affinity ATP-driven potassium transport (or Kdp) system, which catalyzes the hydrolysis of ATP coupled with the electrogenic transport of potassium into the cytoplasm. This subunit binds the extracellular potassium ions and delivers the ions to the membrane domain of KdpB through an intramembrane tunnel. The sequence is that of Potassium-transporting ATPase potassium-binding subunit from Listeria welshimeri serovar 6b (strain ATCC 35897 / DSM 20650 / CCUG 15529 / CIP 8149 / NCTC 11857 / SLCC 5334 / V8).